We begin with the raw amino-acid sequence, 162 residues long: Cytochrome c-type biogenesis protein CcmE (162 aa).

Residues 1 to 8 lie on the Cytoplasmic side of the membrane; the sequence is MNPVRKKR. The helical; Signal-anchor for type II membrane protein transmembrane segment at 9 to 29 threads the bilayer; it reads LIIVLAIVAGVGAAVGLALSA. Over 30–162 the chain is Periplasmic; it reads LQQNINLFYT…GETSYNQEGK (133 aa). Positions 124 and 128 each coordinate heme. Residues 139 to 148 show a composition bias toward basic and acidic residues; the sequence is DSGQLKHYEN. The segment at 139-162 is disordered; the sequence is DSGQLKHYENGKAAGETSYNQEGK.

It belongs to the CcmE/CycJ family.

The protein resides in the cell inner membrane. Heme chaperone required for the biogenesis of c-type cytochromes. Transiently binds heme delivered by CcmC and transfers the heme to apo-cytochromes in a process facilitated by CcmF and CcmH. The protein is Cytochrome c-type biogenesis protein CcmE of Pseudomonas aeruginosa (strain ATCC 15692 / DSM 22644 / CIP 104116 / JCM 14847 / LMG 12228 / 1C / PRS 101 / PAO1).